A 454-amino-acid polypeptide reads, in one-letter code: Bifunctional protein GlmU (454 aa).

Residues 1–226 (MSTTVIILAA…AFEVEGVNDR (226 aa)) form a pyrophosphorylase region. Residues 8–11 (LAAG), K22, Q73, 78–79 (GT), 100–102 (YGD), G137, E151, N166, and N224 each bind UDP-N-acetyl-alpha-D-glucosamine. Mg(2+) is bound at residue D102. N224 serves as a coordination point for Mg(2+). The linker stretch occupies residues 227–247 (LQLAALEREFQKQQAKELMQQ). Residues 248–454 (GVTFADPARF…NYQRPQKLKK (207 aa)) are N-acetyltransferase. Residues R330 and K348 each contribute to the UDP-N-acetyl-alpha-D-glucosamine site. H360 functions as the Proton acceptor in the catalytic mechanism. Y363 and N374 together coordinate UDP-N-acetyl-alpha-D-glucosamine. Residues A377, 383 to 384 (NY), S402, A420, and R437 contribute to the acetyl-CoA site.

It in the N-terminal section; belongs to the N-acetylglucosamine-1-phosphate uridyltransferase family. In the C-terminal section; belongs to the transferase hexapeptide repeat family. In terms of assembly, homotrimer. Requires Mg(2+) as cofactor.

Its subcellular location is the cytoplasm. The catalysed reaction is alpha-D-glucosamine 1-phosphate + acetyl-CoA = N-acetyl-alpha-D-glucosamine 1-phosphate + CoA + H(+). It catalyses the reaction N-acetyl-alpha-D-glucosamine 1-phosphate + UTP + H(+) = UDP-N-acetyl-alpha-D-glucosamine + diphosphate. Its pathway is nucleotide-sugar biosynthesis; UDP-N-acetyl-alpha-D-glucosamine biosynthesis; N-acetyl-alpha-D-glucosamine 1-phosphate from alpha-D-glucosamine 6-phosphate (route II): step 2/2. It functions in the pathway nucleotide-sugar biosynthesis; UDP-N-acetyl-alpha-D-glucosamine biosynthesis; UDP-N-acetyl-alpha-D-glucosamine from N-acetyl-alpha-D-glucosamine 1-phosphate: step 1/1. It participates in bacterial outer membrane biogenesis; LPS lipid A biosynthesis. Catalyzes the last two sequential reactions in the de novo biosynthetic pathway for UDP-N-acetylglucosamine (UDP-GlcNAc). The C-terminal domain catalyzes the transfer of acetyl group from acetyl coenzyme A to glucosamine-1-phosphate (GlcN-1-P) to produce N-acetylglucosamine-1-phosphate (GlcNAc-1-P), which is converted into UDP-GlcNAc by the transfer of uridine 5-monophosphate (from uridine 5-triphosphate), a reaction catalyzed by the N-terminal domain. The sequence is that of Bifunctional protein GlmU from Acinetobacter baumannii (strain ACICU).